Reading from the N-terminus, the 251-residue chain is Imidazole glycerol phosphate synthase subunit HisF (251 aa).

Residues D11 and D130 contribute to the active site.

Belongs to the HisA/HisF family. As to quaternary structure, heterodimer of HisH and HisF.

The protein localises to the cytoplasm. It carries out the reaction 5-[(5-phospho-1-deoxy-D-ribulos-1-ylimino)methylamino]-1-(5-phospho-beta-D-ribosyl)imidazole-4-carboxamide + L-glutamine = D-erythro-1-(imidazol-4-yl)glycerol 3-phosphate + 5-amino-1-(5-phospho-beta-D-ribosyl)imidazole-4-carboxamide + L-glutamate + H(+). The protein operates within amino-acid biosynthesis; L-histidine biosynthesis; L-histidine from 5-phospho-alpha-D-ribose 1-diphosphate: step 5/9. IGPS catalyzes the conversion of PRFAR and glutamine to IGP, AICAR and glutamate. The HisF subunit catalyzes the cyclization activity that produces IGP and AICAR from PRFAR using the ammonia provided by the HisH subunit. The protein is Imidazole glycerol phosphate synthase subunit HisF of Cytophaga hutchinsonii (strain ATCC 33406 / DSM 1761 / CIP 103989 / NBRC 15051 / NCIMB 9469 / D465).